The sequence spans 406 residues: Argininosuccinate synthase (406 aa).

Residue Ala8–Thr16 participates in ATP binding. L-citrulline contacts are provided by Tyr86 and Ser91. Residue Gly116 coordinates ATP. L-aspartate is bound by residues Thr118, Asn122, and Asp123. Asn122 is a binding site for L-citrulline. Positions 126, 175, 184, 261, and 273 each coordinate L-citrulline.

The protein belongs to the argininosuccinate synthase family. Type 1 subfamily. Homotetramer.

It is found in the cytoplasm. The enzyme catalyses L-citrulline + L-aspartate + ATP = 2-(N(omega)-L-arginino)succinate + AMP + diphosphate + H(+). The protein operates within amino-acid biosynthesis; L-arginine biosynthesis; L-arginine from L-ornithine and carbamoyl phosphate: step 2/3. The polypeptide is Argininosuccinate synthase (Brachyspira hyodysenteriae (strain ATCC 49526 / WA1)).